A 501-amino-acid polypeptide reads, in one-letter code: Cytochrome P450 monooxygenase janQ (501 aa).

A helical transmembrane segment spans residues 1–16 (MVLGLLAFIWLMRAWR). An N-linked (GlcNAc...) asparagine glycan is attached at Asn132. Cys439 is a binding site for heme.

It belongs to the cytochrome P450 family. Requires heme as cofactor.

Its subcellular location is the membrane. It functions in the pathway secondary metabolite biosynthesis. In terms of biological role, cytochrome P450 monooxygenase; part of the gene cluster that mediates the biosynthesis of the indole diterpenes janthitremanes such as shearinine K or shearinine A. The geranylgeranyl diphosphate (GGPP) synthase janG catalyzes the first step in janthitremane biosynthesis via conversion of farnesyl pyrophosphate and isopentyl pyrophosphate into geranylgeranyl pyrophosphate (GGPP). Condensation of indole-3-glycerol phosphate with GGPP by the prenyl transferase janC then forms 3-geranylgeranylindole (3-GGI). Epoxidation by the FAD-dependent monooxygenase janM leads to a epoxidized-GGI that is substrate of the terpene cyclase janB for cyclization to yield paspaline. Paspaline is subsequently converted to 13-desoxypaspaline by the cytochrome P450 monooxygenase janP, via beta-PC-M6 in a series of alpha-face oxidations. The cytochrome P450 monooxygenase janQ is proposed to carry out sequential beta-face oxidation steps at C-7 and C-13 of 13-desoxypaspaline to form paspalicine and paspalinine respectively. The indole diterpene prenyltransferase janD may then convert paspalinine into shearinine K which is substrate of janO and/or additional enzymes for oxidation and cyclization to generate shearinine A. In Penicillium janthinellum (Penicillium vitale), this protein is Cytochrome P450 monooxygenase janQ.